The sequence spans 203 residues: MANNFSQLAKKSRNELSSSKVKKEVIENPPLEIFKLGNDVLRTNAKRIGKVDLDTRNLAKDMLKSMYSAKGIGLAAPQVGISKELLVIDINFEDSAAEPLILINPEITAFGNTLNSYEEGCLSIPGVYLNVVRPSTIKLRFSDEMGRPRKMNADGLLARCIQHEVDHLRGVLFVDRVTSKEDLKTELKKEGFQMKDVFPISQS.

The Fe cation site is built by Cys-121 and His-163. Glu-164 is an active-site residue. His-167 is a Fe cation binding site.

Belongs to the polypeptide deformylase family. Fe(2+) serves as cofactor.

It catalyses the reaction N-terminal N-formyl-L-methionyl-[peptide] + H2O = N-terminal L-methionyl-[peptide] + formate. In terms of biological role, removes the formyl group from the N-terminal Met of newly synthesized proteins. Requires at least a dipeptide for an efficient rate of reaction. N-terminal L-methionine is a prerequisite for activity but the enzyme has broad specificity at other positions. This chain is Peptide deformylase, found in Prochlorococcus marinus (strain MIT 9515).